We begin with the raw amino-acid sequence, 348 residues long: GTPase Obg 1 (348 aa).

Residues 1–159 (MSFVDEAKIH…HCVLLKLKIV (159 aa)) form the Obg domain. The OBG-type G domain occupies 160–329 (SDVGIIGMPN…LHAQVKKAVV (170 aa)). Residues 166 to 173 (GMPNAGKS), 191 to 195 (FTTLE), 212 to 215 (DIPG), 279 to 282 (NKCD), and 310 to 312 (GDE) contribute to the GTP site. Mg(2+) is bound by residues Ser-173 and Thr-193.

This sequence belongs to the TRAFAC class OBG-HflX-like GTPase superfamily. OBG GTPase family. Monomer. Mg(2+) is required as a cofactor.

It localises to the cytoplasm. In terms of biological role, an essential GTPase which binds GTP, GDP and possibly (p)ppGpp with moderate affinity, with high nucleotide exchange rates and a fairly low GTP hydrolysis rate. Plays a role in control of the cell cycle, stress response, ribosome biogenesis and in those bacteria that undergo differentiation, in morphogenesis control. The sequence is that of GTPase Obg 1 from Anaplasma marginale (strain St. Maries).